We begin with the raw amino-acid sequence, 248 residues long: Large ribosomal subunit protein uL30B (248 aa).

The interval 1–45 (MSQKKQKIQVEQKVPENVAKKTQRDSKLRDAVAKRRTERLAANKT) is disordered. The segment covering 8-41 (IQVEQKVPENVAKKTQRDSKLRDAVAKRRTERLA) has biased composition (basic and acidic residues).

The protein belongs to the universal ribosomal protein uL30 family.

Binds to G-rich structures in 28S rRNA and in mRNAs. Plays a regulatory role in the translation apparatus; inhibits cell-free translation of mRNAs. This is Large ribosomal subunit protein uL30B (Rpl7-2) from Paramecium tetraurelia.